The following is a 286-amino-acid chain: Deleted in azoospermia-like (286 aa).

The region spanning 30–105 (NTVFVGGIDI…KKLKLGPAIR (76 aa)) is the RRM domain. Positions 155–180 (ACPYPSSPPMAIQQIPVGCQQPSYFQ) constitute a DAZ domain.

Belongs to the RRM DAZ family. In terms of assembly, interacts with the C-terminus of pabp1 and with epabp. Prior to oocyte maturation, found in a complex with epabp and pum2 proteins and spdy1 mRNA; pum2 dissociates from the complex during maturation. As to expression, germ-line specific; expressed in adult testis and ovary. Localized specifically to the oocyte and embryonic germ plasm and to migrating primordial germ cells (PGCs).

Its subcellular location is the cytoplasm. RNA-binding protein that is required for primordial germ cell (PGC) differentiation and indirectly necessary for the migration of PGCs through the endoderm. May promote meiotic cell division during spermatogenesis. Shows a preference for G- and U-rich RNAs and probably binds the 3'-UTR of target mRNAs. Stimulates the initiation of translation of mRNAs through the recruitment of poly(A)-binding proteins (PABPs). This Xenopus tropicalis (Western clawed frog) protein is Deleted in azoospermia-like.